The chain runs to 1210 residues: AF4/FMR2 family member 1 (1210 aa).

Disordered regions lie at residues 1–45 (MAAQ…GEPY), 73–314 (TKSH…KPLP), 366–957 (SWPP…KPQV), and 1098–1119 (TGTP…SQSS). Composition is skewed to basic and acidic residues over residues 9–35 (NDDR…EAFP) and 78–87 (HRLDASENRL). Serine 199, serine 206, and serine 212 each carry phosphoserine. The span at 215-238 (HSNQQTLPRTQGSSKVHGSSNNSK) shows a compositional bias: polar residues. Threonine 220 is subject to Phosphothreonine. Basic and acidic residues predominate over residues 245-259 (SPKDLAVKVHDKETP). A compositionally biased stretch (pro residues) spans 267–279 (AQPPSQTFPPPSL). Over residues 394–419 (HVSSVTQNQKQYDTSSKTHSNSQQGT) the composition is skewed to polar residues. Residues 423 to 439 (LEDDLQLSDSEDSDSEQ) are compositionally biased toward acidic residues. Pro residues predominate over residues 442–453 (EKPPSSSAPPSA). The segment covering 454-472 (PQSLPEPVASAHSSSAESE) has biased composition (low complexity). Residues 473-497 (STSDSDSSSDSESESSSSDSEENEP) are compositionally biased toward acidic residues. The segment covering 536-546 (EPPRRHPESKG) has biased composition (basic and acidic residues). Positions 586 to 602 (QKSPAQQEPPQRQTVGT) are enriched in polar residues. Serine 588 bears the Phosphoserine mark. Lysine 681 is subject to N6-acetyllysine. Residues 688 to 699 (PAKDNVEDRTPE) show a composition bias toward basic and acidic residues. Threonine 697 is subject to Phosphothreonine. A compositionally biased stretch (polar residues) spans 707 to 724 (TESQGPPHSGSGSRTSGC). The span at 732–747 (EDSRKDRLPLPLRDTK) shows a compositional bias: basic and acidic residues. The residue at position 750 (serine 750) is a Phosphoserine. The residue at position 755 (threonine 755) is a Phosphothreonine. Residues 816–834 (GEAERDCDNKKIRLEKEIK) show a composition bias toward basic and acidic residues. Residues 871 to 880 (SSSSQKPAKP) are compositionally biased toward low complexity. A compositionally biased stretch (basic and acidic residues) spans 906 to 932 (NHKDSSIPKQRRVEGKGSRSSSEHKGS). The span at 1110–1119 (PASSVGSQSS) shows a compositional bias: low complexity.

The protein belongs to the AF4 family. Component of the super elongation complex (SEC), at least composed of EAF1, EAF2, CDK9, MLLT3/AF9, AFF (AFF1 or AFF4), the P-TEFb complex and ELL (ELL, ELL2 or ELL3).

The protein resides in the nucleus. The chain is AF4/FMR2 family member 1 (AFF1) from Homo sapiens (Human).